The primary structure comprises 195 residues: uncharacterized protein (195 aa).

One can recognise an HTH tetR-type domain in the interval Val6–Val66. A DNA-binding region (H-T-H motif) is located at residues Lys29–Phe48.

This is an uncharacterized protein from Bacillus subtilis (strain 168).